The chain runs to 268 residues: Phosphatidylglycerol--prolipoprotein diacylglyceryl transferase (268 aa).

Helical transmembrane passes span 16–36 (FITL…GIWL), 56–76 (IWLV…FNWG), and 92–112 (GIAI…FTYV). Residue Arg-136 coordinates a 1,2-diacyl-sn-glycero-3-phospho-(1'-sn-glycerol). 3 helical membrane-spanning segments follow: residues 175 to 195 (PTFL…LWLF), 204 to 224 (GTLL…IEGL), and 236 to 256 (IAQV…FRLY).

It belongs to the Lgt family.

The protein resides in the cell inner membrane. The catalysed reaction is L-cysteinyl-[prolipoprotein] + a 1,2-diacyl-sn-glycero-3-phospho-(1'-sn-glycerol) = an S-1,2-diacyl-sn-glyceryl-L-cysteinyl-[prolipoprotein] + sn-glycerol 1-phosphate + H(+). It participates in protein modification; lipoprotein biosynthesis (diacylglyceryl transfer). Its function is as follows. Catalyzes the transfer of the diacylglyceryl group from phosphatidylglycerol to the sulfhydryl group of the N-terminal cysteine of a prolipoprotein, the first step in the formation of mature lipoproteins. In Thermosynechococcus vestitus (strain NIES-2133 / IAM M-273 / BP-1), this protein is Phosphatidylglycerol--prolipoprotein diacylglyceryl transferase.